Consider the following 421-residue polypeptide: Gamma-glutamyl phosphate reductase (421 aa).

Belongs to the gamma-glutamyl phosphate reductase family.

Its subcellular location is the cytoplasm. It carries out the reaction L-glutamate 5-semialdehyde + phosphate + NADP(+) = L-glutamyl 5-phosphate + NADPH + H(+). The protein operates within amino-acid biosynthesis; L-proline biosynthesis; L-glutamate 5-semialdehyde from L-glutamate: step 2/2. Catalyzes the NADPH-dependent reduction of L-glutamate 5-phosphate into L-glutamate 5-semialdehyde and phosphate. The product spontaneously undergoes cyclization to form 1-pyrroline-5-carboxylate. This Brucella suis biovar 1 (strain 1330) protein is Gamma-glutamyl phosphate reductase.